We begin with the raw amino-acid sequence, 901 residues long: Protein translocase subunit SecA 1 (901 aa).

Residues Q87, 105–109 (GEGKT), and D500 contribute to the ATP site. The segment at 847 to 901 (LNHPESGSWGGEGEGPSSEGAPHLPFKRDGEKVGRNQACPCGSGKKYKQCCGKLS) is disordered. Zn(2+)-binding residues include C885, C887, C896, and C897.

The protein belongs to the SecA family. In terms of assembly, monomer and homodimer. Part of the essential Sec protein translocation apparatus which comprises SecA, SecYEG and auxiliary proteins SecDF-YajC and YidC. Zn(2+) is required as a cofactor.

The protein resides in the cell inner membrane. The protein localises to the cytoplasm. The enzyme catalyses ATP + H2O + cellular proteinSide 1 = ADP + phosphate + cellular proteinSide 2.. In terms of biological role, part of the Sec protein translocase complex. Interacts with the SecYEG preprotein conducting channel. Has a central role in coupling the hydrolysis of ATP to the transfer of proteins into and across the cell membrane, serving both as a receptor for the preprotein-SecB complex and as an ATP-driven molecular motor driving the stepwise translocation of polypeptide chains across the membrane. The polypeptide is Protein translocase subunit SecA 1 (Magnetococcus marinus (strain ATCC BAA-1437 / JCM 17883 / MC-1)).